The following is a 358-amino-acid chain: 1-deoxy-D-xylulose 5-phosphate reductoisomerase (358 aa).

Positions 7, 8, 9, 10, 31, 33, and 114 each coordinate NADPH. Lys115 contributes to the 1-deoxy-D-xylulose 5-phosphate binding site. An NADPH-binding site is contributed by Glu116. Residue Asp134 coordinates Mn(2+). 1-deoxy-D-xylulose 5-phosphate is bound by residues Ser135, Glu136, Ser157, and His180. Position 136 (Glu136) interacts with Mn(2+). Gly186 is a binding site for NADPH. The 1-deoxy-D-xylulose 5-phosphate site is built by Ser193, Asn198, Lys199, and Glu202. Mn(2+) is bound at residue Glu202.

It belongs to the DXR family. Mg(2+) serves as cofactor. Mn(2+) is required as a cofactor.

It catalyses the reaction 2-C-methyl-D-erythritol 4-phosphate + NADP(+) = 1-deoxy-D-xylulose 5-phosphate + NADPH + H(+). Its pathway is isoprenoid biosynthesis; isopentenyl diphosphate biosynthesis via DXP pathway; isopentenyl diphosphate from 1-deoxy-D-xylulose 5-phosphate: step 1/6. Functionally, catalyzes the NADPH-dependent rearrangement and reduction of 1-deoxy-D-xylulose-5-phosphate (DXP) to 2-C-methyl-D-erythritol 4-phosphate (MEP). This chain is 1-deoxy-D-xylulose 5-phosphate reductoisomerase, found in Wolinella succinogenes (strain ATCC 29543 / DSM 1740 / CCUG 13145 / JCM 31913 / LMG 7466 / NCTC 11488 / FDC 602W) (Vibrio succinogenes).